A 258-amino-acid chain; its full sequence is MISLRFQPSTTAGVLSASVSRAGFIKRCGSTKPGRVGRFVTMATAASPLEICVKASITTPNKLGDCPFCQKVLLTMEEKNVPYDMKMVDLSNKPEWFLKISPEGKVPVVKFDEKWVPDSDVITQALEEKYPEPPLATPPEKASVGSKIFSTFVGFLKSKDSGDGTEQVLLDELTTFNDYIKDNGPFINGEKISAADLSLAPKLYHMKIALGHYKNWSVPDSLPFVKSYMENVFSRESFTNTRAETEDVIAGWRPKVMG.

A chloroplast-targeting transit peptide spans 1-42 (MISLRFQPSTTAGVLSASVSRAGFIKRCGSTKPGRVGRFVTM). Residue cysteine 52 is modified to S-glutathionyl cysteine. Glutathione-binding residues include lysine 54 and aspartate 65. L-ascorbate-binding residues include lysine 54 and aspartate 65. A GST N-terminal domain is found at 56–129 (SITTPNKLGD…DVITQALEEK (74 aa)). Cysteine 66 acts as the Nucleophile in catalysis. A disulfide bridge links cysteine 66 with cysteine 69. Positions 66–71 (CPFCQK) match the Glutathione-binding motif. Glutathione is bound by residues lysine 93, valine 106, serine 119, histidine 205, and tryptophan 252. Residues 130-258 (YPEPPLATPP…IAGWRPKVMG (129 aa)) enclose the GST C-terminal domain. Lysine 255 provides a ligand contact to L-ascorbate.

This sequence belongs to the GST superfamily. DHAR family. Monomer. Interacts with TRX3. In terms of processing, partial S-glutathionylation and intramolecular disulfide bond formation between Cys-66 and Cys-69 in the presence of oxidized glutathione (GSSG). Could be reduced by TRX-dependent process.

The protein localises to the plastid. Its subcellular location is the chloroplast stroma. The catalysed reaction is RX + glutathione = an S-substituted glutathione + a halide anion + H(+). It carries out the reaction L-dehydroascorbate + 2 glutathione = glutathione disulfide + L-ascorbate. Functionally, displays a dual function. As a soluble protein, exhibits glutathione-dependent thiol transferase and dehydroascorbate (DHA) reductase activities. Key component of the ascorbate recycling system. Involved in the redox homeostasis, especially in scavenging of ROS under oxidative stresses. The protein is Glutathione S-transferase DHAR3, chloroplastic (DHAR3) of Arabidopsis thaliana (Mouse-ear cress).